We begin with the raw amino-acid sequence, 630 residues long: MHFHERFDVIVIGGGHAGTEAALAAARMGSKTLLLTHNIDTLGQMSCNPAIGGIGKGHLVKEIDALGGAMAIATDYAGIQFRTLNSSKGPAVRATRAQADRALYRAKIQEILQNQPNLRLFQQAVDDLIVENGRVTGVVTQMGLAFEAPAVVLTAGTFLSGKIHIGMQNYSGGRAGDPPSIALADRLRELPIRIGRLKTGTPPRIDANTINFDLMTEQKGDTPLPVMSFIGDVSQHPKQISCFVTHTNEKTHDIIRGGLDRSPMYSGVIEGVGPRYCPSIEDKIHRFADKSSHQIFIEPEGLNTNEIYPNGISTSLPFDVQLNLVRSIKGMENAEIIRPGYAIEYDYFDPRDLKNSLETKSIDGLFFAGQINGTTGYEEAGAQGLLAGMNASLQVQGKEIWCPRRDEAYLGVLVDDLSTLGTKEPYRMFTSRAEYRLLLREDNADLRLTEKGREIGLVDDERWAKFSEKRESIELELQRLRSQWVHPNSPLIDVLNPELNTPISREASFEDLLRRPEMDYPKLMSLEGFGPGLDDPRAAEQVQIQVKYSGYIQRQQDEIDKAIRHETTGLPLDLDYQEVPGLSNEVIAKLNDHKPETIGQASRISGMTPAAISILLVHLKRRGLLRKKAS.

Residues 13 to 18, V125, and S180 each bind FAD; that span reads GGGHAG. An NAD(+)-binding site is contributed by 273–287; sequence GPRYCPSIEDKIHRF. Q370 provides a ligand contact to FAD.

This sequence belongs to the MnmG family. As to quaternary structure, homodimer. Heterotetramer of two MnmE and two MnmG subunits. FAD is required as a cofactor.

The protein localises to the cytoplasm. Its function is as follows. NAD-binding protein involved in the addition of a carboxymethylaminomethyl (cmnm) group at the wobble position (U34) of certain tRNAs, forming tRNA-cmnm(5)s(2)U34. This Shewanella woodyi (strain ATCC 51908 / MS32) protein is tRNA uridine 5-carboxymethylaminomethyl modification enzyme MnmG.